Reading from the N-terminus, the 511-residue chain is MEKFEGYSEKQKSRQQYFVYPLLFQEYIYAFAHDYGLNGSEPVEIVSWNNKKFSSLLVKRLIIRMYQQNFLDNSVNHPNQDRLLDYKIFFYSEFYSQILSEGFAIVVEIPFSLRELSCPKEKEIPKFQNLRSIHSIFPFLEDKFLHLDYLSHIEIPYPIHLEILVQLLQYRIQDVPSLHLLRFFLNYYSNWNSFITSMKSILFFQKENKRLVKFLYNSYVSEYEFFLLFLRKQSSCLPLAYSGTFLERIHFSRKMEHFGIMYPGFSRKTLWFFMDPLIHYVRYQGKAILASKGSFFLKKKWKCYLINFWQYYFFFWTQPRRIHINQLANSCFDFMGYLSSVPKSPLLVRNQMLENSFLIDTRMKKFDTIVPATLLIGYLSKAQFCTGSGHPISKPIWTDLSDWDILDRFGRICRNLFHYYSGSSKKRTLYRLKYILRLSCARTLARKHKSTVRTFMQRLGSAFLEEFFTEEEQVFSLMFTKTTLFSFSGSHTERIWYLDIIGINDLVNPLN.

Belongs to the intron maturase 2 family. MatK subfamily.

The protein localises to the plastid. Its subcellular location is the chloroplast. Its function is as follows. Usually encoded in the trnK tRNA gene intron. Probably assists in splicing its own and other chloroplast group II introns. The protein is Maturase K of Hordeum vulgare (Barley).